We begin with the raw amino-acid sequence, 442 residues long: Phosphoglucosamine mutase (442 aa).

Catalysis depends on Ser-103, which acts as the Phosphoserine intermediate. Mg(2+) is bound by residues Ser-103, Asp-241, Asp-243, and Asp-245. Ser-103 is modified (phosphoserine).

The protein belongs to the phosphohexose mutase family. The cofactor is Mg(2+). In terms of processing, activated by phosphorylation.

It carries out the reaction alpha-D-glucosamine 1-phosphate = D-glucosamine 6-phosphate. Catalyzes the conversion of glucosamine-6-phosphate to glucosamine-1-phosphate. The protein is Phosphoglucosamine mutase of Deinococcus deserti (strain DSM 17065 / CIP 109153 / LMG 22923 / VCD115).